Reading from the N-terminus, the 407-residue chain is Imidazolonepropionase (407 aa).

The Fe(3+) site is built by histidine 75 and histidine 77. Zn(2+) is bound by residues histidine 75 and histidine 77. Arginine 84, tyrosine 142, and histidine 169 together coordinate 4-imidazolone-5-propanoate. Position 142 (tyrosine 142) interacts with N-formimidoyl-L-glutamate. Histidine 232 is a binding site for Fe(3+). Histidine 232 is a binding site for Zn(2+). Glutamine 235 provides a ligand contact to 4-imidazolone-5-propanoate. Residue aspartate 306 coordinates Fe(3+). Aspartate 306 contributes to the Zn(2+) binding site. N-formimidoyl-L-glutamate-binding residues include asparagine 308 and glycine 310. Residue threonine 311 participates in 4-imidazolone-5-propanoate binding.

This sequence belongs to the metallo-dependent hydrolases superfamily. HutI family. Zn(2+) serves as cofactor. It depends on Fe(3+) as a cofactor.

The protein localises to the cytoplasm. It carries out the reaction 4-imidazolone-5-propanoate + H2O = N-formimidoyl-L-glutamate. Its pathway is amino-acid degradation; L-histidine degradation into L-glutamate; N-formimidoyl-L-glutamate from L-histidine: step 3/3. Catalyzes the hydrolytic cleavage of the carbon-nitrogen bond in imidazolone-5-propanoate to yield N-formimidoyl-L-glutamate. It is the third step in the universal histidine degradation pathway. The sequence is that of Imidazolonepropionase from Rhodococcus jostii (strain RHA1).